The chain runs to 199 residues: Superoxide dismutase [Cu-Zn] (199 aa).

Residues 1-22 (MKLTKVALFSLGLFGFSSMALA) form the signal peptide. Histidine 92, histidine 94, and histidine 117 together coordinate Cu cation. Cysteines 99 and 195 form a disulfide. Zn(2+) contacts are provided by histidine 117, histidine 126, histidine 135, and aspartate 138. Position 173 (histidine 173) interacts with Cu cation.

Belongs to the Cu-Zn superoxide dismutase family. In terms of assembly, homodimer. Cu cation serves as cofactor. Zn(2+) is required as a cofactor.

Its subcellular location is the periplasm. It catalyses the reaction 2 superoxide + 2 H(+) = H2O2 + O2. Its function is as follows. Destroys radicals which are normally produced within the cells and which are toxic to biological systems. May play a role in the interactive biology of organisms with their hosts and so contribute to their capacity to cause disease. This chain is Superoxide dismutase [Cu-Zn] (sodC), found in Haemophilus ducreyi (strain 35000HP / ATCC 700724).